Reading from the N-terminus, the 464-residue chain is DNA primase DnaG (464 aa).

The region spanning 200-274 is the Toprim domain; the sequence is DSIIVVEGRA…DVDYVARAPE (75 aa). Positions 206, 248, and 250 each coordinate Mg(2+). Basic and acidic residues predominate over residues 322–332; the sequence is NGREEKVREVK. The segment at 322-359 is disordered; it reads NGREEKVREVKPPAPAPAPAPAPKPIEKPEPKEREEKI. Residues 333-345 show a composition bias toward pro residues; sequence PPAPAPAPAPAPK. Residues 346-359 show a composition bias toward basic and acidic residues; that stretch reads PIEKPEPKEREEKI.

The protein belongs to the archaeal DnaG primase family. In terms of assembly, forms a ternary complex with MCM helicase and DNA. Component of the archaeal exosome complex. Mg(2+) serves as cofactor.

It carries out the reaction ssDNA + n NTP = ssDNA/pppN(pN)n-1 hybrid + (n-1) diphosphate.. RNA polymerase that catalyzes the synthesis of short RNA molecules used as primers for DNA polymerase during DNA replication. Also part of the exosome, which is a complex involved in RNA degradation. Acts as a poly(A)-binding protein that enhances the interaction between heteromeric, adenine-rich transcripts and the exosome. The chain is DNA primase DnaG from Thermococcus onnurineus (strain NA1).